A 568-amino-acid chain; its full sequence is Sulfite reductase [NADPH] hemoprotein beta-component (568 aa).

[4Fe-4S] cluster contacts are provided by Cys-425, Cys-431, Cys-470, and Cys-474. Cys-474 contributes to the siroheme binding site.

It belongs to the nitrite and sulfite reductase 4Fe-4S domain family. In terms of assembly, alpha(8)-beta(8). The alpha component is a flavoprotein, the beta component is a hemoprotein. The cofactor is siroheme. It depends on [4Fe-4S] cluster as a cofactor.

It catalyses the reaction hydrogen sulfide + 3 NADP(+) + 3 H2O = sulfite + 3 NADPH + 4 H(+). The protein operates within sulfur metabolism; hydrogen sulfide biosynthesis; hydrogen sulfide from sulfite (NADPH route): step 1/1. Its function is as follows. Component of the sulfite reductase complex that catalyzes the 6-electron reduction of sulfite to sulfide. This is one of several activities required for the biosynthesis of L-cysteine from sulfate. The chain is Sulfite reductase [NADPH] hemoprotein beta-component from Xanthomonas oryzae pv. oryzae (strain MAFF 311018).